The primary structure comprises 520 residues: Actin-related protein 4 (520 aa).

Positions 320 to 406 are disordered; the sequence is PLKRTKPGTS…KATVPSNGIQ (87 aa). The segment covering 339–361 has biased composition (polar residues); sequence AESTPVPASTEQEAVDSPSQEPN. Residues 362-374 show a composition bias toward basic and acidic residues; the sequence is ENGKRPVENKEDS. The segment covering 389 to 405 has biased composition (polar residues); that stretch reads ANSNESSAKATVPSNGI.

The protein belongs to the actin family. ARP4 subfamily. Component of the NuA4 histone acetyltransferase complex, of the INO80 chromatin remodeling complex, and of the SWR1 chromatin remodeling complex.

It localises to the nucleus. Its function is as follows. Chromatin interaction component of the NuA4 histone acetyltransferase complex which is involved in transcriptional activation of selected genes principally by acetylation of nucleosomal histone H4 and H2A. The NuA4 complex is also involved in DNA repair. Is required for NuA4 complex integrity. Component of the SWR1 complex which mediates the ATP-dependent exchange of histone H2A for the H2A variant HZT1 leading to transcriptional regulation of selected genes by chromatin remodeling. Component of the INO80 complex which remodels chromatin by shifting nucleosomes and is involved in DNA repair. This Kluyveromyces lactis (strain ATCC 8585 / CBS 2359 / DSM 70799 / NBRC 1267 / NRRL Y-1140 / WM37) (Yeast) protein is Actin-related protein 4 (ARP4).